The primary structure comprises 189 residues: uncharacterized protein (189 aa).

Residues 31–54 adopt a coiled-coil conformation; sequence KCENIDDLANRYEVSKQEVEKVFK. 4 EF-hand domains span residues 47–82, 83–118, 120–155, and 157–189; these read QEVE…LGID, VSPK…KIKL, TVKA…TVST, and ITVK…CQTV. Asp-60, Asp-62, Ser-64, Thr-66, Glu-71, Asp-96, Ser-98, Asp-100, Gln-102, Glu-107, Asp-133, Asn-135, Glu-137, and Glu-144 together coordinate Ca(2+).

This is an uncharacterized protein from Caenorhabditis elegans.